Here is a 943-residue protein sequence, read N- to C-terminus: MDTKEEKKEQKERKQSYFARLKKKKQAKQNAEIVSAASSKSRSGKDDANSDILEQDKFNVTAEGDHSTDDKKKRKSNQLKEIRRTELKRYYSVDDNQNKTHDKKEKKMMVQKPQGTMEYTAGSQDTLNSVALKFNVTPNKLVELNKLFTHTIVPGQVLFVPDANISSSTIQLSSSTPGATVSPSSSDAEYDKLPDADLARKALKPIERVLSSTSEEDEPGVVKFLKMNCRYFTDGKGVVGGVMIVTPNNIMFDPHKSDPLVIENGCEEYGLICPMEEVVSIALYSDISHMKIKDALPSDLPRDLCPLYRPGEWEDLASEKDINPFSKFKSINKEKRQQNGERTLALDAKSVRSPEESTERTCTRIEPPDNSELWKLKNLQSSRGTTSESPSVTQLSMRAALEPTAKENCLLKGDEDFVDLEELSSQPESGINKGDATKECLSYDQKKDGPHTVMSAKKGHVQSAQEVMGPESDTELKGALDLETAEKQDEAPEVDKHSGSPENLGESTLNIHEDLDKIKLIEFYLNKNKEGSQLLENVQKSELSDRKSIEPGGIDITLSSSLPQAGDSPPEDNKEPGTLWVKGGETLPLKLDPSAEETVINNKEVLDSLGSSLDKMCHSAQMDNKSEIQLWLLKRIQVPIEDILPSKEEKSKTPPMFLCIKVGKPMRKSFASHTATMVQQYSKRRKQPEYWFAVPRERVDHLYTFFVQWSPDVYGKDAKEQGFVVVEKEELNMIDNFFSEPTTKSWEIITVEEAKRRKSTCSYYEEEEEEEEGLPILQPHSALLENMHIEQLARRLPARVQGYPWRLAYSTLEHGTSLKTLYRKSASLDSPVLLVIKDMDNQIFGAYATHPFKFSDHYYGTGETFLYTFSPNFKVFKWSGENSYFINGDISSLELGGGGGRFGLWLDADLYHGRSNSCSTFNNDILSKKEDFIVQDLEVWTFE.

Methionine 1 carries the N-acetylmethionine modification. A compositionally biased stretch (basic and acidic residues) spans 1–15 (MDTKEEKKEQKERKQ). A coiled-coil region spans residues 1 to 32 (MDTKEEKKEQKERKQSYFARLKKKKQAKQNAE). The interval 1–83 (MDTKEEKKEQ…RKSNQLKEIR (83 aa)) is disordered. Position 92 is a phosphoserine (serine 92). Residues 117–160 (MEYTAGSQDTLNSVALKFNVTPNKLVELNKLFTHTIVPGQVLFV) form the LysM domain. A Phosphothreonine modification is found at threonine 137. The tract at residues 169 to 189 (TIQLSSSTPGATVSPSSSDAE) is disordered. A compositionally biased stretch (polar residues) spans 177–187 (PGATVSPSSSD). Residues serine 182, serine 186, serine 211, serine 212, and serine 214 each carry the phosphoserine modification. Residues 334–369 (EKRQQNGERTLALDAKSVRSPEESTERTCTRIEPPD) form a disordered region. Over residues 349 to 369 (KSVRSPEESTERTCTRIEPPD) the composition is skewed to basic and acidic residues. Phosphoserine occurs at positions 442, 498, and 500. Over residues 486-499 (EKQDEAPEVDKHSG) the composition is skewed to basic and acidic residues. Disordered regions lie at residues 486–507 (EKQD…LGES) and 543–576 (LSDR…NKEP). Positions 782-943 (ALLENMHIEQ…VQDLEVWTFE (162 aa)) constitute a TLDc domain.

This sequence belongs to the OXR1 family. Interacts with ESR1, ESR2A, ESR2B, THRB, PPARG and RARA in a ligand-inducible manner. Interacts with the heterodimer AHR-ARNT. As to expression, highly expressed in brain and kidney. Weakly expressed in mammary gland, lung and testis. In brain, expression is found in neurons of cerebral cortex, thalamus, hypothalamus, hippocampus, cerebellum, striatum and choroid plexus.

It localises to the nucleus. In terms of biological role, enhances the transcriptional activities of several nuclear receptors. Involved in the coactivation of different nuclear receptors, such as ESR1, THRB, PPARG and RARA. This is Nuclear receptor coactivator 7 (Ncoa7) from Mus musculus (Mouse).